The primary structure comprises 95 residues: Large ribosomal subunit protein uL23 (95 aa).

This sequence belongs to the universal ribosomal protein uL23 family. As to quaternary structure, part of the 50S ribosomal subunit. Contacts protein L29.

Binds to 23S rRNA. One of the proteins that surrounds the polypeptide exit tunnel on the outside of the ribosome. In Methanopyrus kandleri (strain AV19 / DSM 6324 / JCM 9639 / NBRC 100938), this protein is Large ribosomal subunit protein uL23.